The sequence spans 224 residues: tRNA (guanine-N(7)-)-methyltransferase (224 aa).

Glu54, Glu79, Glu106, and Asp129 together coordinate S-adenosyl-L-methionine. Residue Asp129 is part of the active site. Residues Lys133 and Asp165 each coordinate substrate.

This sequence belongs to the class I-like SAM-binding methyltransferase superfamily. TrmB family.

It catalyses the reaction guanosine(46) in tRNA + S-adenosyl-L-methionine = N(7)-methylguanosine(46) in tRNA + S-adenosyl-L-homocysteine. It functions in the pathway tRNA modification; N(7)-methylguanine-tRNA biosynthesis. Its function is as follows. Catalyzes the formation of N(7)-methylguanine at position 46 (m7G46) in tRNA. The chain is tRNA (guanine-N(7)-)-methyltransferase from Chlamydia muridarum (strain MoPn / Nigg).